A 460-amino-acid chain; its full sequence is Allantoinase (460 aa).

Residues His70, His72, Lys157, His193, His250, and Asp323 each coordinate Zn(2+). Lys157 carries the N6-carboxylysine modification.

The protein belongs to the metallo-dependent hydrolases superfamily. Allantoinase family. In terms of assembly, homotetramer. Requires Zn(2+) as cofactor. Carboxylation allows a single lysine to coordinate two zinc ions.

It catalyses the reaction (S)-allantoin + H2O = allantoate + H(+). It functions in the pathway nitrogen metabolism; (S)-allantoin degradation; allantoate from (S)-allantoin: step 1/1. In terms of biological role, catalyzes the conversion of allantoin (5-ureidohydantoin) to allantoic acid by hydrolytic cleavage of the five-member hydantoin ring. Involved in the utilization of purines as secondary nitrogen sources, when primary sources are limiting. The protein is Allantoinase (DAL1) of Saccharomyces cerevisiae (strain ATCC 204508 / S288c) (Baker's yeast).